Consider the following 230-residue polypeptide: ATP synthase subunit a (230 aa).

A run of 5 helical transmembrane segments spans residues 17-37, 78-98, 107-127, 165-187, and 198-218; these read LPIT…FIMA, IFPF…IGVI, DLSV…WFGI, LFGN…GFLV, and EAII…AGGI.

The protein belongs to the ATPase A chain family. As to quaternary structure, F-type ATPases have 2 components, CF(1) - the catalytic core - and CF(0) - the membrane proton channel. CF(1) has five subunits: alpha(3), beta(3), gamma(1), delta(1), epsilon(1). CF(0) has three main subunits: a(1), b(2) and c(9-12). The alpha and beta chains form an alternating ring which encloses part of the gamma chain. CF(1) is attached to CF(0) by a central stalk formed by the gamma and epsilon chains, while a peripheral stalk is formed by the delta and b chains.

The protein resides in the cell inner membrane. Functionally, key component of the proton channel; it plays a direct role in the translocation of protons across the membrane. The sequence is that of ATP synthase subunit a from Legionella pneumophila subsp. pneumophila (strain Philadelphia 1 / ATCC 33152 / DSM 7513).